A 140-amino-acid polypeptide reads, in one-letter code: Nucleoside diphosphate kinase (140 aa).

ATP-binding residues include Lys-11, Phe-59, Arg-87, Thr-93, Arg-104, and Asn-114. The active-site Pros-phosphohistidine intermediate is the His-117.

Belongs to the NDK family. In terms of assembly, homotetramer. Requires Mg(2+) as cofactor.

The protein resides in the cytoplasm. It catalyses the reaction a 2'-deoxyribonucleoside 5'-diphosphate + ATP = a 2'-deoxyribonucleoside 5'-triphosphate + ADP. The catalysed reaction is a ribonucleoside 5'-diphosphate + ATP = a ribonucleoside 5'-triphosphate + ADP. Its function is as follows. Major role in the synthesis of nucleoside triphosphates other than ATP. The ATP gamma phosphate is transferred to the NDP beta phosphate via a ping-pong mechanism, using a phosphorylated active-site intermediate. The sequence is that of Nucleoside diphosphate kinase from Methylorubrum extorquens (strain CM4 / NCIMB 13688) (Methylobacterium extorquens).